A 238-amino-acid chain; its full sequence is TATA-box-binding protein (238 aa).

Residues 1 to 58 are disordered; that stretch reads MDLKLPPTNPTNPQQAKTFMKSIEEDEKNKAEDLDIIKKEDIDEPKQEDTTDGNGGGG. The span at 27–49 shows a compositional bias: basic and acidic residues; sequence EKNKAEDLDIIKKEDIDEPKQED. A run of 2 repeats spans residues 65-141 and 155-232.

It belongs to the TBP family. As to quaternary structure, belongs to the TFIID complex together with the TBP-associated factors (TAFs). Binds DNA as monomer.

The protein localises to the nucleus. Its function is as follows. General transcription factor that functions at the core of the DNA-binding multiprotein factor TFIID. Binding of TFIID to the TATA box is the initial transcriptional step of the pre-initiation complex (PIC), playing a role in the activation of eukaryotic genes transcribed by RNA polymerase II. This chain is TATA-box-binding protein (TBP1), found in Candida albicans (strain SC5314 / ATCC MYA-2876) (Yeast).